The chain runs to 458 residues: Ribulose bisphosphate carboxylase (458 aa).

Asparagine 111 provides a ligand contact to substrate. Lysine 166 serves as the catalytic Proton acceptor. Lysine 168 lines the substrate pocket. Mg(2+) is bound by residues lysine 191, aspartate 193, and glutamate 194. Lysine 191 is subject to N6-carboxylysine. The active-site Proton acceptor is histidine 287. Residues arginine 288, histidine 321, and serine 368 each contribute to the substrate site.

This sequence belongs to the RuBisCO large chain family. Type II subfamily. In terms of assembly, homodimer. The cofactor is Mg(2+).

It catalyses the reaction 2 (2R)-3-phosphoglycerate + 2 H(+) = D-ribulose 1,5-bisphosphate + CO2 + H2O. It carries out the reaction D-ribulose 1,5-bisphosphate + O2 = 2-phosphoglycolate + (2R)-3-phosphoglycerate + 2 H(+). RuBisCO catalyzes two reactions: the carboxylation of D-ribulose 1,5-bisphosphate, the primary event in carbon dioxide fixation, as well as the oxidative fragmentation of the pentose substrate. Both reactions occur simultaneously and in competition at the same active site. The chain is Ribulose bisphosphate carboxylase (cbbM) from Rhodobacter capsulatus (Rhodopseudomonas capsulata).